A 200-amino-acid polypeptide reads, in one-letter code: Ras-related protein Rab-7b (200 aa).

Residues 15-22 (GALGVGKT), 34-40 (YEDYQTT), 63-67 (DTGGQ), 124-127 (NKID), and 154-155 (AK) contribute to the GTP site. 2 consecutive short sequence motifs (switch) follow at residues 28–41 (YVHK…QTTL) and 67–82 (QERF…KGSD). The residue at position 186 (S186) is a Phosphoserine. Residues C199 and C200 are each lipidated (S-geranylgeranyl cysteine).

The protein belongs to the small GTPase superfamily. Rab family.

Its subcellular location is the late endosome. It is found in the lysosome. The protein localises to the golgi apparatus. It localises to the trans-Golgi network. The protein resides in the cytoplasmic vesicle. Its subcellular location is the phagosome. It is found in the phagosome membrane. Its function is as follows. Controls vesicular trafficking from endosomes to the trans-Golgi network (TGN). Acts as a negative regulator of TLR9 signaling and can suppress TLR9-triggered TNFA, IL6, and IFNB production in macrophages by promoting TLR9 lysosomal degradation. Also negatively regulates TLR4 signaling in macrophages by promoting lysosomal degradation of TLR4. Promotes megakaryocytic differentiation by increasing NF-kappa-B-dependent IL6 production and subsequently enhancing the association of STAT3 with GATA1. Not involved in the regulation of the EGF- and EGFR degradation pathway. This Bos taurus (Bovine) protein is Ras-related protein Rab-7b (RAB7B).